A 670-amino-acid chain; its full sequence is UvrABC system protein B (670 aa).

The Helicase ATP-binding domain maps to 26–183 (EGLENGLAHQ…RRLSELQYSR (158 aa)). 39–46 (GVTGSGKT) is an ATP binding site. The short motif at 92–115 (YYDYYQPEAYVPSSDTFIEKDASV) is the Beta-hairpin element. The region spanning 431–597 (QVDDLLSEIR…GLNKKIGDIL (167 aa)) is the Helicase C-terminal domain. The interval 600–620 (GQPSTRGKGKGRGGKVADTNN) is disordered. The UVR domain occupies 630-665 (DQKIRELEAKMYTHAQNLEFEQAAELRDQVHQLRQQ).

Belongs to the UvrB family. In terms of assembly, forms a heterotetramer with UvrA during the search for lesions. Interacts with UvrC in an incision complex.

The protein localises to the cytoplasm. Its function is as follows. The UvrABC repair system catalyzes the recognition and processing of DNA lesions. A damage recognition complex composed of 2 UvrA and 2 UvrB subunits scans DNA for abnormalities. Upon binding of the UvrA(2)B(2) complex to a putative damaged site, the DNA wraps around one UvrB monomer. DNA wrap is dependent on ATP binding by UvrB and probably causes local melting of the DNA helix, facilitating insertion of UvrB beta-hairpin between the DNA strands. Then UvrB probes one DNA strand for the presence of a lesion. If a lesion is found the UvrA subunits dissociate and the UvrB-DNA preincision complex is formed. This complex is subsequently bound by UvrC and the second UvrB is released. If no lesion is found, the DNA wraps around the other UvrB subunit that will check the other stand for damage. The sequence is that of UvrABC system protein B from Yersinia enterocolitica serotype O:8 / biotype 1B (strain NCTC 13174 / 8081).